The following is a 174-amino-acid chain: Crossover junction endodeoxyribonuclease RuvC (174 aa).

Residues D8, E67, and D139 contribute to the active site. Residues D8, E67, and D139 each contribute to the Mg(2+) site.

It belongs to the RuvC family. Homodimer which binds Holliday junction (HJ) DNA. The HJ becomes 2-fold symmetrical on binding to RuvC with unstacked arms; it has a different conformation from HJ DNA in complex with RuvA. In the full resolvosome a probable DNA-RuvA(4)-RuvB(12)-RuvC(2) complex forms which resolves the HJ. Mg(2+) is required as a cofactor.

Its subcellular location is the cytoplasm. It carries out the reaction Endonucleolytic cleavage at a junction such as a reciprocal single-stranded crossover between two homologous DNA duplexes (Holliday junction).. The RuvA-RuvB-RuvC complex processes Holliday junction (HJ) DNA during genetic recombination and DNA repair. Endonuclease that resolves HJ intermediates. Cleaves cruciform DNA by making single-stranded nicks across the HJ at symmetrical positions within the homologous arms, yielding a 5'-phosphate and a 3'-hydroxyl group; requires a central core of homology in the junction. The consensus cleavage sequence is 5'-(A/T)TT(C/G)-3'. Cleavage occurs on the 3'-side of the TT dinucleotide at the point of strand exchange. HJ branch migration catalyzed by RuvA-RuvB allows RuvC to scan DNA until it finds its consensus sequence, where it cleaves and resolves the cruciform DNA. In Pseudomonas fluorescens (strain ATCC BAA-477 / NRRL B-23932 / Pf-5), this protein is Crossover junction endodeoxyribonuclease RuvC.